A 336-amino-acid polypeptide reads, in one-letter code: MSKEYEIIIVGGGPGGYVAAIKAAQYGAKVALVEKEVVGGICLNHGCIPTKTFLKSAKVFNTVKKSMDFGVSTSGEVGFDWSKIVSRKDGVVKQLTNGVAFLLKKNGVDVYNGFGDIKSANEVVVNGESLKTKNVIIATGSSAVVPPIPGVKEAYEKGIVVTSRELLNVKNYPKSIVIVGGGVIGVEFATVFNSFGSKVTIIEMMDGILPTMDDDIRVAYAKTLKRDGIEILTKAEVKKVDDHKVTYSLDGKETTIEGDLILMSVGTRANSKGLEHLGLEMDRANIKTNEYLQTNVPGVYAIGDVNGKFMLAHVAEHEGITAVQHILKIGHAKMNY.

FAD-binding positions include 34–42, Lys51, and Gly115; that span reads EKEVVGGIC. A disulfide bridge connects residues Cys42 and Cys47. NAD(+) contacts are provided by residues 180-184, Glu203, Val237, and 264-267; these read GGGVI and SVGT. Asp304 and Ala312 together coordinate FAD.

Belongs to the class-I pyridine nucleotide-disulfide oxidoreductase family. As to quaternary structure, homodimer. The cofactor is FAD.

Its subcellular location is the cytoplasm. The catalysed reaction is N(6)-[(R)-dihydrolipoyl]-L-lysyl-[protein] + NAD(+) = N(6)-[(R)-lipoyl]-L-lysyl-[protein] + NADH + H(+). Its function is as follows. Lipoamide dehydrogenase is a component of the alpha-ketoacid dehydrogenase complexes. This is Dihydrolipoyl dehydrogenase (pdhD) from Acholeplasma laidlawii.